Here is a 152-residue protein sequence, read N- to C-terminus: MGRFIFVSFGLLVVYLSLSGTAADCSSSWSSYEGHCYKAFKQSKTWADAESFCTKQVNGGHLVSIESSGEADFVAHLIAQKIKSAKIHVWIGLRAQNKEKQCSIEWSDGSSISYENWIEEESKKCLGVHKATGFRKWENFYCEQRDPFVCEA.

An N-terminal signal peptide occupies residues M1–A23. The C-type lectin domain maps to D24–A152. Disulfide bonds link C25-C36, C53-C150, and C125-C142. Ca(2+) is bound by residues S64, E66, and E70. A Ca(2+)-binding site is contributed by E151.

Belongs to the snaclec family. As to quaternary structure, heterodimer of subunits A and B; disulfide-linked. In terms of tissue distribution, expressed by the venom gland.

Its subcellular location is the secreted. In terms of biological role, anticoagulant protein which binds to the gamma-carboxyglutamic acid-domain regions of factors IX and factor X in the presence of calcium with a 1 to 1 stoichiometry. Also inhibits platelet aggregation by binding to platelet glycoprotein Ibalpha (GP1BA) and functioning as a blocker of vWF. Is devoid of hemorrhagic and lethal activities. Possesses antithrombotic and thrombolytic activities. Also hydrolyzes the Aalpha-chain of fibrinogen. Does not affect the Bbeta-chain and the gamma chain. This Deinagkistrodon acutus (Hundred-pace snake) protein is Snaclec anticoagulant protein subunit A.